We begin with the raw amino-acid sequence, 420 residues long: Light-independent protochlorophyllide reductase subunit N (420 aa).

Residues C21, C46, and C103 each contribute to the [4Fe-4S] cluster site.

Belongs to the BchN/ChlN family. In terms of assembly, protochlorophyllide reductase is composed of three subunits; BchL, BchN and BchB. Forms a heterotetramer of two BchB and two BchN subunits. [4Fe-4S] cluster serves as cofactor.

The catalysed reaction is chlorophyllide a + oxidized 2[4Fe-4S]-[ferredoxin] + 2 ADP + 2 phosphate = protochlorophyllide a + reduced 2[4Fe-4S]-[ferredoxin] + 2 ATP + 2 H2O. It participates in porphyrin-containing compound metabolism; bacteriochlorophyll biosynthesis (light-independent). Functionally, component of the dark-operative protochlorophyllide reductase (DPOR) that uses Mg-ATP and reduced ferredoxin to reduce ring D of protochlorophyllide (Pchlide) to form chlorophyllide a (Chlide). This reaction is light-independent. The NB-protein (BchN-BchB) is the catalytic component of the complex. This is Light-independent protochlorophyllide reductase subunit N from Chlorobium luteolum (strain DSM 273 / BCRC 81028 / 2530) (Pelodictyon luteolum).